Reading from the N-terminus, the 247-residue chain is TLC domain-containing protein 1 (247 aa).

The N-terminal stretch at 1–35 is a signal peptide; it reads MPRLLHPALPLLLGATLTFRALRRALCRLPLPVHV. Over 36 to 46 the chain is Extracellular; the sequence is RADPLRTWRWH. A TLC domain is found at 40-234; that stretch reads LRTWRWHNLL…LLRSDFCPEH (195 aa). The chain crosses the membrane as a helical span at residues 47–67; sequence NLLVSFAHSIVSGIWALLCVW. Over 68 to 83 the chain is Cytoplasmic; that stretch reads QTPDMLVEIETAWSLS. A helical transmembrane segment spans residues 84 to 104; that stretch reads GYLLVCFSAGYFIHDTVDIVA. Over 105–123 the chain is Extracellular; that stretch reads SGQTRASWEYLVHHVMAMG. Positions 124-144 form an intramembrane region, helical; sequence AFFSGIFWSSFVGGGVLTLLV. Topologically, residues 145 to 173 are extracellular; that stretch reads EVSNIFLTIRMMMKISNAQDHLLYRVNKY. The chain crosses the membrane as a helical span at residues 174–194; sequence VNLVMYFLFRLAPQAYLTHFF. The Cytoplasmic portion of the chain corresponds to 195–201; the sequence is LRYVNQR. A helical membrane pass occupies residues 202–222; it reads TLGTFLLGILLMLDVMIIIYF. Over 223–247 the chain is Extracellular; the sequence is SRLLRSDFCPEHVPKKQHKDKFLTE.

It is found in the cell membrane. In terms of biological role, regulates the composition and fluidity of the plasma membrane. Inhibits the incorporation of membrane-fluidizing phospholipids containing omega-3 long-chain polyunsaturated fatty acids (LCPUFA) and thereby promotes membrane rigidity. Does not appear to have any effect on LCPUFA synthesis. The sequence is that of TLC domain-containing protein 1 (TLCD1) from Homo sapiens (Human).